The chain runs to 339 residues: MKTKNVKLLFFFFSVSLLLIAVVNAAEGHSHGGPKCECSHEDDHENKAGARKYKIAAIPTVLIAGIIGVLFPLLGKVFPSLRPETCFFFVTKAFAAGVILATGFMHVLPEAYEMLNSPCLTSEAWEFPFTGFIAMIAAILTLSVDTFATSSFYKSHCKASKRVSDGETGESSVDSEKVQILRTRVIAQVLELGIIVHSVVIGISLGASQSPDAAKALFIALMFHQCFEGLGLGGCIAQGKFKCLSVTIMSTFFAITTPIGIVVGMGIANSYDESSPTALIVQGVLNAASAGILIYMSLVDLLAADFTHPKMQSNTGLQIMAHIALLLGAGLMSLLAKWA.

The N-terminal stretch at 1 to 25 (MKTKNVKLLFFFFSVSLLLIAVVNA) is a signal peptide. The Extracellular portion of the chain corresponds to 26-54 (AEGHSHGGPKCECSHEDDHENKAGARKYK). A helical transmembrane segment spans residues 55–75 (IAAIPTVLIAGIIGVLFPLLG). Residues 76-86 (KVFPSLRPETC) are Cytoplasmic-facing. A helical transmembrane segment spans residues 87–107 (FFFVTKAFAAGVILATGFMHV). At 108 to 123 (LPEAYEMLNSPCLTSE) the chain is on the extracellular side. The helical transmembrane segment at 124–144 (AWEFPFTGFIAMIAAILTLSV) threads the bilayer. Over 145 to 184 (DTFATSSFYKSHCKASKRVSDGETGESSVDSEKVQILRTR) the chain is Cytoplasmic. The chain crosses the membrane as a helical span at residues 185–205 (VIAQVLELGIIVHSVVIGISL). The Extracellular portion of the chain corresponds to 206-216 (GASQSPDAAKA). A helical membrane pass occupies residues 217–237 (LFIALMFHQCFEGLGLGGCIA). The Cytoplasmic segment spans residues 238–247 (QGKFKCLSVT). Residues 248–268 (IMSTFFAITTPIGIVVGMGIA) form a helical membrane-spanning segment. Over 269–278 (NSYDESSPTA) the chain is Extracellular. A helical transmembrane segment spans residues 279-299 (LIVQGVLNAASAGILIYMSLV). Residues 300–315 (DLLAADFTHPKMQSNT) lie on the Cytoplasmic side of the membrane. Residues 316-336 (GLQIMAHIALLLGAGLMSLLA) form a helical membrane-spanning segment. Over 337–339 (KWA) the chain is Extracellular.

Belongs to the ZIP transporter (TC 2.A.5) family. In terms of tissue distribution, expressed predominantly in the roots of zinc-deficient plants.

Its subcellular location is the cell membrane. Mediates zinc uptake from the rhizosphere. May also transport other divalent cations. This Arabidopsis thaliana (Mouse-ear cress) protein is Zinc transporter 3 (ZIP3).